The following is a 329-amino-acid chain: Sex comb on midleg-like protein 1 (329 aa).

The interval 125 to 194 (NEVHESFSYP…SDFSEHNYQP (70 aa)) is disordered. Ser-138 carries the phosphoserine modification. Over residues 159-168 (FRMEEYQRAE) the composition is skewed to basic and acidic residues. Ser-238 carries the phosphoserine modification. The SAM domain occupies 258-325 (WSVEAVVLFL…YYIDRLKQGK (68 aa)).

Belongs to the SCM family. In terms of tissue distribution, highly expressed in testis and pancreas. Preferentially expressed in the germ stem cells of testis.

The protein resides in the nucleus. Its function is as follows. Putative Polycomb group (PcG) protein. PcG proteins act by forming multiprotein complexes, which are required to maintain the transcriptionally repressive state of homeotic genes throughout development. May be involved in spermatogenesis during sexual maturation. The polypeptide is Sex comb on midleg-like protein 1 (SCML1) (Macaca mulatta (Rhesus macaque)).